A 783-amino-acid polypeptide reads, in one-letter code: Lon protease (783 aa).

Positions 11–203 (IPVLPLRDVV…FLMGQMESEI (193 aa)) constitute a Lon N-terminal domain. Residue 355-362 (GPPGVGKT) participates in ATP binding. The 182-residue stretch at 591-772 (SNRIGQVTGL…DEVLKVALER (182 aa)) folds into the Lon proteolytic domain. Catalysis depends on residues Ser-678 and Lys-721.

Belongs to the peptidase S16 family. In terms of assembly, homohexamer. Organized in a ring with a central cavity.

The protein localises to the cytoplasm. It carries out the reaction Hydrolysis of proteins in presence of ATP.. In terms of biological role, ATP-dependent serine protease that mediates the selective degradation of mutant and abnormal proteins as well as certain short-lived regulatory proteins. Required for cellular homeostasis and for survival from DNA damage and developmental changes induced by stress. Degrades polypeptides processively to yield small peptide fragments that are 5 to 10 amino acids long. Binds to DNA in a double-stranded, site-specific manner. Regulates swarmer cell differentiation of V.parahaemolyticus. The polypeptide is Lon protease (Vibrio parahaemolyticus serotype O3:K6 (strain RIMD 2210633)).